The sequence spans 272 residues: Homeobox protein SIX3 (272 aa).

Residues 169-228 constitute a DNA-binding region (homeobox); the sequence is GEQKTHCFKERTRGLLREWYLQDPYPNPGKKRELAHATGLTPTQVGNWFKNRRQRDRAAA. Positions 244–272 are disordered; sequence CTLSGGDSSERADGDTFLSVTDSDSDLDV.

It belongs to the SIX/Sine oculis homeobox family. In terms of assembly, interacts with GMNN.

Its subcellular location is the nucleus. Functionally, transcriptional regulator which can act as both a transcriptional repressor and activator by binding a ATTA homeodomain core recognition sequence on these target genes. During forebrain development represses WNT1 expression allowing zona limitans intrathalamica formation and thereby ensuring proper anterio-posterior patterning of the diencephalon and formation of the rostral diencephalon. Acts as a direct upstream activator of SHH expression in the rostral diencephalon ventral midline and that in turn SHH maintains its expression. In addition, Six3 activity is required for the formation of the telencephalon. During postnatal stages of brain development is necessary for ependymal cell maturation by promoting the maturation of radial glia into ependymal cells through regulation of neuroblast proliferation and migration. Acts on the proliferation and differentiation of neural progenitor cells through activating transcription of CCND1 and CCND2. During early lens formation plays a role in lens induction and specification by activating directly PAX6 in the presumptive lens ectoderm. In turn PAX6 activates SIX3 resulting in activation of PDGFRA and CCND1 promoting cell proliferation. Also is required for the neuroretina development by directly suppressing WNT8B expression in the anterior neural plate territory. Its action during retina development and lens morphogenesis is AES and TLE4-dependent manner. Furthermore, during eye development regulates several genes expression. Before and during early lens development represses the CRYGF promoter by binding a SIX repressor element. Directly activates RHO transcription, or cooperates with CRX or NRL. Six3 also functions in the formation of the proximodistal axis of the optic cup, and promotes the formation of optic vesicles-like structures. During pituitary development, acts in parallel or alternatively with HESX1 to control cell proliferation through Wnt/beta-catenin pathway. Plays a role in eye development by suppressing WNT1 expression and in dorsal-ventral patterning by repressing BMP signaling pathway. This is Homeobox protein SIX3 (six3) from Oryzias latipes (Japanese rice fish).